The primary structure comprises 389 residues: MAAMMMRQKVAGAIAGERRSAVAPKMGRAATAPVVVASANASAFKGAAVTARVKASTRAARVQSRRTAVLTQAKIGDSLAEFLVEATPDPKLRHVMMSMAEATRTIAHKVRTASCAGTACVNSFGDEQLAVDMVADKLLFEALKYSHVCKLACSEEVPEPVDMGGEGFCVAFDPLDGSSSSDTNFAVGTIFGVWPGDKLTNITGREQVAAGMGIYGPRTVFCIALKDAPGCHEFLLMDDGKWMHVKETTHIGEGKMFAPGNLRATFDNPAYERLINFYLGEKYTLRYTGGIVPDLFQIIVKEKGVFTNLTSPTTKAKLRILFEVAPLALLIEKAGGASSCDGKAVSALDIPILVCDQRTQICYGSIGEVRRFEEYMYGTSPRFSEKVVA.

Cysteines 115 and 120 form a disulfide. Positions 126, 155, 173, 175, and 176 each coordinate Mg(2+). Residues 176–179, Y287, and K317 contribute to the substrate site; that span reads DGSS. Mg(2+) is bound at residue E323.

This sequence belongs to the FBPase class 1 family. In terms of assembly, homodimer. Mg(2+) serves as cofactor.

Its subcellular location is the plastid. It is found in the chloroplast. The catalysed reaction is D-sedoheptulose 1,7-bisphosphate + H2O = D-sedoheptulose 7-phosphate + phosphate. It participates in carbohydrate biosynthesis; Calvin cycle. This is Sedoheptulose-1,7-bisphosphatase, chloroplastic (CSBP) from Chlamydomonas reinhardtii (Chlamydomonas smithii).